Reading from the N-terminus, the 203-residue chain is CASP-like protein 2U2 (203 aa).

The disordered stretch occupies residues methionine 1–alanine 21. Residues methionine 1–glycine 27 are Cytoplasmic-facing. The chain crosses the membrane as a helical span at residues alanine 28 to valine 48. The Extracellular segment spans residues lysine 49–serine 73. N-linked (GlcNAc...) asparagine glycosylation is present at asparagine 51. The chain crosses the membrane as a helical span at residues alanine 74 to leucine 94. Topologically, residues alanine 95 to lysine 108 are cytoplasmic. The helical transmembrane segment at leucine 109–alanine 129 threads the bilayer. Over alanine 130–arginine 163 the chain is Extracellular. Residues alanine 164–alanine 184 form a helical membrane-spanning segment. Over glutamine 185–isoleucine 203 the chain is Cytoplasmic.

The protein belongs to the Casparian strip membrane proteins (CASP) family. Homodimer and heterodimers.

The protein localises to the cell membrane. In Osmunda lancea (Fern), this protein is CASP-like protein 2U2.